A 123-amino-acid chain; its full sequence is Small ribosomal subunit protein uS13 (123 aa).

The tract at residues 94 to 123 (AGLPVRGQRTKTNARTRKGPKKTVGVQRKK) is disordered. The span at 101–123 (QRTKTNARTRKGPKKTVGVQRKK) shows a compositional bias: basic residues.

It belongs to the universal ribosomal protein uS13 family. Part of the 30S ribosomal subunit. Forms a loose heterodimer with protein S19. Forms two bridges to the 50S subunit in the 70S ribosome.

In terms of biological role, located at the top of the head of the 30S subunit, it contacts several helices of the 16S rRNA. In the 70S ribosome it contacts the 23S rRNA (bridge B1a) and protein L5 of the 50S subunit (bridge B1b), connecting the 2 subunits; these bridges are implicated in subunit movement. Contacts the tRNAs in the A and P-sites. This is Small ribosomal subunit protein uS13 from Acetivibrio thermocellus (strain ATCC 27405 / DSM 1237 / JCM 9322 / NBRC 103400 / NCIMB 10682 / NRRL B-4536 / VPI 7372) (Clostridium thermocellum).